We begin with the raw amino-acid sequence, 300 residues long: MTSKGNAGNPPTPTPAPVKSQPLWHNLVSGGIAGVSEILVMYPLDVVKTRQQLQVGKGQSMMSSLVTMVRHDGLKMYRGIVPPILVEAPKRAIKFASNKFYEKQILSYCGNTKPTQMQAIGSGVLAGITEAFIVVPFELVKIRLQAKENAGKYTSTMDCVNKTFRAEGLSGFFKGLESTIWRHACWNGGYFGLIHTIKSALPKPTTEQGVLVNNFIAGGLAGTFGTMLNTPADVVKSRIQNQVGAGKYNWCIPSILTVAREEGFSALYKGFLPKVLRLGPGGGILLVVNEFVMKLLAGKN.

The segment at 1–20 (MTSKGNAGNPPTPTPAPVKS) is disordered. Solcar repeat units lie at residues 21-104 (QPLW…YEKQ), 114-200 (PTQM…IKSA), and 209-295 (GVLV…VMKL). A run of 6 helical transmembrane segments spans residues 27–47 (LVSGGIAGVSEILVMYPLDVV), 74–93 (LKMYRGIVPPILVEAPKRAI), 120–140 (IGSGVLAGITEAFIVVPFELV), 171–191 (GFFKGLESTIWRHACWNGGYF), 209–229 (GVLVNNFIAGGLAGTFGTMLN), and 278–298 (LGPGGGILLVVNEFVMKLLAG).

It belongs to the mitochondrial carrier (TC 2.A.29) family.

It is found in the mitochondrion inner membrane. The enzyme catalyses 2-oxoadipate(in) + 2-oxoglutarate(out) = 2-oxoadipate(out) + 2-oxoglutarate(in). It catalyses the reaction hexanedioate(in) + 2-oxoglutarate(out) = hexanedioate(out) + 2-oxoglutarate(in). The catalysed reaction is L-2-aminoadipate(in) + 2-oxoglutarate(out) = L-2-aminoadipate(out) + 2-oxoglutarate(in). It carries out the reaction glutarate(in) + 2-oxoglutarate(out) = glutarate(out) + 2-oxoglutarate(in). The enzyme catalyses 2-oxoheptanedioate(in) + 2-oxoglutarate(out) = 2-oxoheptanedioate(out) + 2-oxoglutarate(in). It catalyses the reaction heptanedioate(in) + 2-oxoglutarate(out) = heptanedioate(out) + 2-oxoglutarate(in). The catalysed reaction is citrate(in) + 2-oxoglutarate(out) = citrate(out) + 2-oxoglutarate(in). Functionally, transports dicarboxylates across the inner membranes of mitochondria by a counter-exchange mechanism. Can transport 2-oxoadipate (2-oxohexanedioate), 2-oxoglutarate, adipate (hexanedioate), glutarate, and to a lesser extent, pimelate (heptanedioate), 2-oxopimelate (2-oxoheptanedioate), 2-aminoadipate (2-aminohexanedioate), oxaloacetate, and citrate. Plays a central role in catabolism of lysine, hydroxylysine, and tryptophan, by transporting common metabolite intermediates (such as 2-oxoadipate) into the mitochondria, where it is converted into acetyl-CoA and can enter the citric acid (TCA) cycle. The chain is Probable mitochondrial 2-oxodicarboxylate carrier (mcfT) from Dictyostelium discoideum (Social amoeba).